We begin with the raw amino-acid sequence, 448 residues long: Squalene synthase ERG9 (448 aa).

A helical transmembrane segment spans residues 428–448 (CNVVLFGIGALILSLIYFVLY).

It belongs to the phytoene/squalene synthase family. Requires Mg(2+) as cofactor.

The protein localises to the endoplasmic reticulum membrane. It is found in the microsome. It carries out the reaction 2 (2E,6E)-farnesyl diphosphate + NADPH + H(+) = squalene + 2 diphosphate + NADP(+). It catalyses the reaction 2 (2E,6E)-farnesyl diphosphate + NADH + H(+) = squalene + 2 diphosphate + NAD(+). The protein operates within terpene metabolism; lanosterol biosynthesis; lanosterol from farnesyl diphosphate: step 1/3. In terms of biological role, squalene synthase; part of the third module of ergosterol biosynthesis pathway that includes the late steps of the pathway. ERG9 produces squalene from 2 farnesyl pyrophosphate moieties. The third module or late pathway involves the ergosterol synthesis itself through consecutive reactions that mainly occur in the endoplasmic reticulum (ER) membrane. Firstly, the squalene synthase ERG9 catalyzes the condensation of 2 farnesyl pyrophosphate moieties to form squalene, which is the precursor of all steroids. Squalene synthase is crucial for balancing the incorporation of farnesyl diphosphate (FPP) into sterol and nonsterol isoprene synthesis. Secondly, the squalene epoxidase ERG1 catalyzes the stereospecific oxidation of squalene to (S)-2,3-epoxysqualene, which is considered to be a rate-limiting enzyme in steroid biosynthesis. Then, the lanosterol synthase ERG7 catalyzes the cyclization of (S)-2,3 oxidosqualene to lanosterol, a reaction that forms the sterol core. In the next steps, lanosterol is transformed to zymosterol through a complex process involving various demethylation, reduction and desaturation reactions. The lanosterol 14-alpha-demethylase ERG11 (also known as CYP51) catalyzes C14-demethylation of lanosterol to produce 4,4'-dimethyl cholesta-8,14,24-triene-3-beta-ol, which is critical for ergosterol biosynthesis. The C-14 reductase ERG24 reduces the C14=C15 double bond of 4,4-dimethyl-cholesta-8,14,24-trienol to produce 4,4-dimethyl-cholesta-8,24-dienol. 4,4-dimethyl-cholesta-8,24-dienol is substrate of the C-4 demethylation complex ERG25-ERG26-ERG27 in which ERG25 catalyzes the three-step monooxygenation required for the demethylation of 4,4-dimethyl and 4alpha-methylsterols, ERG26 catalyzes the oxidative decarboxylation that results in a reduction of the 3-beta-hydroxy group at the C-3 carbon to an oxo group, and ERG27 is responsible for the reduction of the keto group on the C-3. ERG28 has a role as a scaffold to help anchor ERG25, ERG26 and ERG27 to the endoplasmic reticulum and ERG29 regulates the activity of the iron-containing C4-methylsterol oxidase ERG25. Then, the sterol 24-C-methyltransferase ERG6 catalyzes the methyl transfer from S-adenosyl-methionine to the C-24 of zymosterol to form fecosterol. The C-8 sterol isomerase ERG2 catalyzes the reaction which results in unsaturation at C-7 in the B ring of sterols and thus converts fecosterol to episterol. The sterol-C5-desaturase ERG3 then catalyzes the introduction of a C-5 double bond in the B ring to produce 5-dehydroepisterol. The C-22 sterol desaturase ERG5 further converts 5-dehydroepisterol into ergosta-5,7,22,24(28)-tetraen-3beta-ol by forming the C-22(23) double bond in the sterol side chain. Finally, ergosta-5,7,22,24(28)-tetraen-3beta-ol is substrate of the C-24(28) sterol reductase ERG4 to produce ergosterol. The chain is Squalene synthase ERG9 from Candida albicans (strain SC5314 / ATCC MYA-2876) (Yeast).